The sequence spans 560 residues: Vesicular glutamate transporter 1 (560 aa).

Residues 1–63 (MEFRQEEFRK…CTCFGLPRRY (63 aa)) lie on the Cytoplasmic side of the membrane. A helical membrane pass occupies residues 64–84 (IIAIMSGLGFCISFGIRCNLG). Over 85–116 (VAIVSMVNNSTTHRGGHVVMQKAQFNWDPETV) the chain is Extracellular. A helical membrane pass occupies residues 117–137 (GLIHGSFFWGYIVTQIPGGFI). Over 138–140 (CQK) the chain is Cytoplasmic. A helical membrane pass occupies residues 141–161 (FAANRVFGFAIVATSTLNMLI). Residues 162–169 (PSAARVHY) lie on the Extracellular side of the membrane. Residues 170–190 (GCVIFVRILQGLVEGVTYPAC) form a helical membrane-spanning segment. The Cytoplasmic portion of the chain corresponds to 191–208 (HGIWSKWAPPLERSRLAT). A helical transmembrane segment spans residues 209–229 (TAFCGSYAGAVVAMPLAGVLV). Residues 230–236 (QYSGWSS) are Extracellular-facing. The helical transmembrane segment at 237-257 (VFYVYGSFGIFWYLFWLLVSY) threads the bilayer. The Cytoplasmic segment spans residues 258 to 302 (ESPALHPSISEEERKYIEDAIGESAKLMNPVTKFNTPWRRFFTSM). Residues 303 to 323 (PVYAIIVANFCRSWTFYLLLI) traverse the membrane as a helical segment. Topologically, residues 324–341 (SQPAYFEEVFGFEISKVG) are extracellular. Residues 342-362 (LVSALPHLVMTIIVPIGGQIA) traverse the membrane as a helical segment. Over 363-378 (DFLRSRRIMSTTNVRK) the chain is Cytoplasmic. The helical transmembrane segment at 379-399 (LMNCGGFGMEATLLLVVGYSH) threads the bilayer. The Extracellular portion of the chain corresponds to 400–401 (SK). Residues 402–422 (GVAISFLVLAVGFSGFAISGF) form a helical membrane-spanning segment. The Cytoplasmic segment spans residues 423–435 (NVNHLDIAPRYAS). A helical transmembrane segment spans residues 436-456 (ILMGISNGVGTLSGMVCPIIV). The Extracellular segment spans residues 457–469 (GAMTKHKTREEWQ). The chain crosses the membrane as a helical span at residues 470–490 (YVFLIASLVHYGGVIFYGVFA). Topologically, residues 491–560 (SGEKQPWAEP…PRPPPPVRDY (70 aa)) are cytoplasmic. The interval 497–560 (WAEPEEMSEE…PRPPPPVRDY (64 aa)) is disordered. A Phosphoserine modification is found at S504. The segment covering 520–529 (DESEMEDEAE) has biased composition (acidic residues). Composition is skewed to pro residues over residues 531-540 (PGAPPAPPPS) and 550-560 (PPRPPPPVRDY).

It belongs to the major facilitator superfamily. Sodium/anion cotransporter family. VGLUT subfamily. Interacts with SHANK3.

It is found in the cytoplasmic vesicle. The protein resides in the secretory vesicle. Its subcellular location is the synaptic vesicle membrane. The protein localises to the cell membrane. It localises to the synapse. It is found in the synaptosome. It catalyses the reaction L-glutamate(out) = L-glutamate(in). It carries out the reaction chloride(in) = chloride(out). The catalysed reaction is 3 Na(+)(out) + phosphate(out) = 3 Na(+)(in) + phosphate(in). The enzyme catalyses phosphate(in) = phosphate(out). It catalyses the reaction K(+)(in) + H(+)(out) = K(+)(out) + H(+)(in). Its activity is regulated as follows. Chloride channel activity is allosterically activated by lumenal H(+) and Cl(-) leading to synaptic vesicles acidification. The L-glutamate transport activity is allosterically activated by lumenal H(+) and Cl(-). The allosteric activation by H(+) efficiently prevents non-vesicular efflux across the plasma membrane, thereby restricting L-glutamate transport activity to acidic membranes such as synaptic vesicles. Functionally, multifunctional transporter that transports L-glutamate as well as multiple ions such as chloride, proton, potassium, sodium and phosphate. At the synaptic vesicle membrane, mainly functions as an uniporter which transports preferentially L-glutamate but also phosphate from the cytoplasm into synaptic vesicles at presynaptic nerve terminals of excitatory neural cells. The L-glutamate or phosphate uniporter activity is electrogenic and is driven by the proton electrochemical gradient, mainly by the electrical gradient established by the vacuolar H(+)-ATPase across the synaptic vesicle membrane. In addition, functions as a chloride channel that allows a chloride permeation through the synaptic vesicle membrane that affects the proton electrochemical gradient and promotes synaptic vesicles acidification. Moreover, may function as a K(+)/H(+) antiport allowing to maintain the electrical gradient and to decrease chemical gradient and therefore sustain vesicular glutamate uptake. The vesicular K(+)/H(+) antiport activity is electroneutral. At the plasma membrane, following exocytosis, functions as a symporter of Na(+) and phosphate from the extracellular space to the cytoplasm allowing synaptic phosphate homeostasis regulation. The symporter activity is driven by an inside negative membrane potential and is electrogenic. Is necessary for synaptic signaling of visual-evoked responses from photoreceptors. In Bos taurus (Bovine), this protein is Vesicular glutamate transporter 1.